A 737-amino-acid polypeptide reads, in one-letter code: Alpha-adducin (737 aa).

Methionine 1 carries the post-translational modification N-acetylmethionine. The interval 1 to 21 is disordered; it reads MNGDSRAAVVTSPPPTTAPHK. At serine 12 the chain carries Phosphoserine. Residue serine 59 is modified to Phosphoserine; by PKA. Position 64 is a phosphoserine (serine 64). Threonine 331 bears the Phosphothreonine mark. Phosphoserine is present on residues serine 334, serine 353, serine 355, serine 358, and serine 366. A Phosphoserine; by PKA modification is found at serine 408. Over residues 419–430 the composition is skewed to polar residues; it reads YSFTSDGDSGTC. 2 disordered regions span residues 419–490 and 576–737; these read YSFT…NLFV and RREV…KSES. Serine 427 is subject to Phosphoserine. Threonine 429 is subject to Phosphothreonine. Position 431 is a phosphoserine (serine 431). Serine 436 bears the Phosphoserine; by PKA mark. Threonine 445 carries the post-translational modification Phosphothreonine; by ROCK2. A phosphoserine mark is found at serine 464 and serine 465. Threonine 480 carries the phosphothreonine; by ROCK2 modification. A Phosphoserine; by PKA modification is found at serine 481. Positions 576 to 601 are enriched in basic and acidic residues; that stretch reads RREVERKQKGSEENLDEAREQKEKSP. 3 positions are modified to phosphoserine: serine 586, serine 600, and serine 613. Positions 602-614 are enriched in pro residues; that stretch reads PDQPAVPYPPPST. Threonine 614 carries the post-translational modification Phosphothreonine. A phosphoserine mark is found at serine 678, serine 707, serine 710, and serine 714. Positions 687 to 714 are enriched in low complexity; that stretch reads PVAEEAAPSAAEEGAAADPGSDGSPGKS. Over residues 715 to 737 the composition is skewed to basic residues; that stretch reads PSKKKKKFRTPSFLKKSKKKSES. Serine 716 carries the phosphoserine; by PKC modification. Positions 717–734 are interaction with calmodulin; it reads KKKKKFRTPSFLKKSKKK. Phosphoserine; by PKA and PKC is present on serine 726.

It belongs to the aldolase class II family. Adducin subfamily. As to quaternary structure, heterodimer of an alpha and a beta subunit or an alpha and a gamma subunit.

The protein localises to the cytoplasm. The protein resides in the cytoskeleton. It is found in the cell membrane. Its function is as follows. Membrane-cytoskeleton-associated protein that promotes the assembly of the spectrin-actin network. Binds to calmodulin. The polypeptide is Alpha-adducin (ADD1) (Pongo abelii (Sumatran orangutan)).